The chain runs to 214 residues: Adenylate kinase (214 aa).

Residue 14–19 (GSGKGT) coordinates ATP. The NMP stretch occupies residues 34–63 (SSGDLFRSAIKSATPLGSKAAEYINKGLLV). Residues Ser35, Arg40, 61 to 63 (LLV), 89 to 92 (GFPR), and Gln96 contribute to the AMP site. An LID region spans residues 130-163 (SRFICPACNYVYNQSQGFKECPTCHVALIRRSDD). Position 131 (Arg131) interacts with ATP. Residues Cys134 and Cys137 each coordinate Zn(2+). ATP is bound at residue 140-141 (VY). Zn(2+) contacts are provided by Cys150 and Cys153. Residues Arg160 and Arg171 each contribute to the AMP site. An ATP-binding site is contributed by Thr199.

This sequence belongs to the adenylate kinase family. Monomer.

It is found in the cytoplasm. The catalysed reaction is AMP + ATP = 2 ADP. The protein operates within purine metabolism; AMP biosynthesis via salvage pathway; AMP from ADP: step 1/1. Catalyzes the reversible transfer of the terminal phosphate group between ATP and AMP. Plays an important role in cellular energy homeostasis and in adenine nucleotide metabolism. In Chlamydia caviae (strain ATCC VR-813 / DSM 19441 / 03DC25 / GPIC) (Chlamydophila caviae), this protein is Adenylate kinase.